We begin with the raw amino-acid sequence, 558 residues long: Zinc finger protein piragua (558 aa).

A ZAD domain is found at 15 to 94 (STCRLCHHNT…QEREQSLQEQ (80 aa)). Zn(2+) contacts are provided by Cys-17, Cys-20, Cys-67, and Cys-70. Positions 132-177 (LAESSEEEFALGSDGEYENYDDDDEEEEEDYDEEDEEDGQNGEDVD) are enriched in acidic residues. Positions 132 to 178 (LAESSEEEFALGSDGEYENYDDDDEEEEEDYDEEDEEDGQNGEDVDM) are disordered. C2H2-type zinc fingers lie at residues 208-231 (FLCQ…LAAH), 237-260 (YCCN…KTLH), 266-288 (YVCA…TIVH), 294-316 (FTCN…MRIH), 322-344 (FVCQ…TRSH), 350-372 (FQCG…QQVH), 414-436 (YHCD…QALH), 441-464 (FACK…LEAH), and 468-490 (FTCG…LKVH).

In terms of biological role, may be involved in transcriptional regulation. The function of this protein is unclear. According to one report, it is required for development and viability since mutants display defects in several developmental morphogenetic processes including dorsal closure and head involution, and die by the first instar larval stage. It may also be involved in fwe-mediated cellular competition. However, according to another report, it is not required for development or viability since mutants have no visible phenotype and are fertile. The polypeptide is Zinc finger protein piragua (Drosophila melanogaster (Fruit fly)).